We begin with the raw amino-acid sequence, 317 residues long: Melanocyte-stimulating hormone receptor (317 aa).

Residues 1-37 lie on the Extracellular side of the membrane; sequence MPMQEPQRRLLDPFNSTRTGTPHLKLSANQTGPWCLH. Residues asparagine 15 and asparagine 29 are each glycosylated (N-linked (GlcNAc...) asparagine). A helical membrane pass occupies residues 38 to 63; it reads VSIPDGLFLSLGLVSLVENVLVVISI. Residues 64 to 72 lie on the Cytoplasmic side of the membrane; sequence AKNRNLHSP. Residues 73–93 form a helical membrane-spanning segment; that stretch reads MYYFICCLALSDLLVSVSIVL. Over 94 to 118 the chain is Extracellular; that stretch reads ETTLILVLEAGALATRVTVVQQLDN. Residues 119–140 traverse the membrane as a helical segment; it reads VIDVLICGSMVSSLCFLGAIAV. Topologically, residues 141 to 163 are cytoplasmic; the sequence is DRYISIFYALRYHSIVTLPRARW. The helical transmembrane segment at 164-183 threads the bilayer; that stretch reads AIVAIWVASISSSTLFVAYY. The Extracellular portion of the chain corresponds to 184-191; the sequence is NHTAVLLC. The helical transmembrane segment at 192 to 211 threads the bilayer; sequence LVTFFLATLALMAVLYVHML. Residues 212–240 are Cytoplasmic-facing; the sequence is ARAHQHAQAIAQLHKRQHLVHQGFRLKGA. The helical transmembrane segment at 241-266 threads the bilayer; it reads ATLTILLGIFFLCWGPFFLYLTLIVL. Topologically, residues 267 to 279 are extracellular; the sequence is CPKHPTCSCFFKN. A helical transmembrane segment spans residues 280-300; that stretch reads LNLFLALIIFNSIVDPLIYAF. The Cytoplasmic portion of the chain corresponds to 301–317; sequence RSQELRMTLKEVLLCSW. Cysteine 315 is lipidated: S-palmitoyl cysteine.

It belongs to the G-protein coupled receptor 1 family. As to quaternary structure, interacts with MGRN1, but does not undergo MGRN1-mediated ubiquitination; this interaction competes with GNAS-binding and thus inhibits agonist-induced cAMP production. Interacts with OPN3; the interaction results in a decrease in MC1R-mediated cAMP signaling and ultimately a decrease in melanin production in melanocytes.

It localises to the cell membrane. Its function is as follows. Receptor for MSH (alpha, beta and gamma) and ACTH. The activity of this receptor is mediated by G proteins which activate adenylate cyclase. Mediates melanogenesis, the production of eumelanin (black/brown) and phaeomelanin (red/yellow), via regulation of cAMP signaling in melanocytes. This Chaetodipus baileyi (Bailey's pocket mouse) protein is Melanocyte-stimulating hormone receptor (MC1R).